The sequence spans 129 residues: LEM domain-containing protein 1 (129 aa).

One can recognise an LEM domain in the interval 1-45 (MVDVKCLSDYELHKHLMKLGFTPGPILPSTRKTYEKKLVQLLASP). Positions 45-129 (PPWKPPVMKR…RAPRTTSHGA (85 aa)) are disordered. Residues 83 to 97 (SLKKTTLDATRDPRA) show a composition bias toward basic and acidic residues.

This is LEM domain-containing protein 1 (Lemd1) from Mus musculus (Mouse).